Here is a 327-residue protein sequence, read N- to C-terminus: Chain length determinant protein (327 aa).

Residues 1–31 are Cytoplasmic-facing; that stretch reads MTVDSNTSSGRGNDPEQIDLIELLLQLWRGK. The helical transmembrane segment at 32 to 52 threads the bilayer; it reads MTIIVAVIIAILLAVGYLMIA. Residues 53-294 are Periplasmic-facing; the sequence is KEKWTSTAII…LPVRRDSPKT (242 aa). A helical membrane pass occupies residues 295–315; it reads AITLVLAVLLGGMIGAGIVLG. The Cytoplasmic portion of the chain corresponds to 316-327; the sequence is RNALRSYKPKAL.

The protein belongs to the WzzB/Cld/Rol family.

The protein localises to the cell inner membrane. It functions in the pathway bacterial outer membrane biogenesis; lipopolysaccharide biosynthesis. Its function is as follows. Confers a modal distribution of chain length on the O-antigen component of lipopolysaccharide (LPS). Gives rise to a reduced number of short chain molecules and increases in numbers of longer molecules, with a modal value of 20. The sequence is that of Chain length determinant protein (wzzB) from Salmonella typhimurium (strain LT2 / SGSC1412 / ATCC 700720).